A 1870-amino-acid chain; its full sequence is Dedicator of cytokinesis protein 5 (1870 aa).

The SH3 domain maps to Lys8–Ala69. The residue at position 365 (Ser365) is a Phosphoserine. The C2 DOCK-type domain occupies Arg443–Cys627. An N6-acetyllysine modification is found at Lys818. The 412-residue stretch at Tyr1231 to Leu1642 folds into the DOCKER domain. A disordered region spans residues Val1679–Glu1702. Phosphoserine occurs at positions 1756, 1766, 1785, and 1789. Positions Asn1772–Gln1870 are disordered. Positions Gln1784–Thr1794 are enriched in pro residues. Thr1794 carries the phosphothreonine modification. The segment covering Ala1797–Thr1808 has biased composition (polar residues). At Thr1814 the chain carries Phosphothreonine. Over residues Pro1815–Ser1824 the composition is skewed to pro residues. Residues Ser1834 and Ser1869 each carry the phosphoserine modification.

The protein belongs to the DOCK family. As to quaternary structure, interacts with CRK and CRKL. Interacts (via N-terminus) with tensin TNS3 (via N-terminus); the interaction increases DOCK5 guanine nucleotide exchange activity towards Rac. Interacts with ELMO1.

It localises to the cytoplasm. The protein localises to the cell membrane. The protein resides in the cell projection. It is found in the podosome. Functionally, guanine nucleotide exchange factor (GEF) for Rho and Rac. GEF proteins activate small GTPases by exchanging bound GDP for free GTP. Along with DOCK1, mediates CRK/CRKL regulation of epithelial and endothelial cell spreading and migration on type IV collagen. This is Dedicator of cytokinesis protein 5 (DOCK5) from Homo sapiens (Human).